A 481-amino-acid chain; its full sequence is 2-methylisoborneol synthase (481 aa).

Disordered regions lie at residues 1 to 125 (MPDS…PVGP) and 139 to 160 (QAAVPPDAVPAPSGPSAEGPVV). The segment covering 11-23 (TSLPEQPPAPPAT) has biased composition (pro residues). The segment covering 24 to 33 (APDAPAATVT) has biased composition (low complexity). Composition is skewed to pro residues over residues 52-64 (VTRPSSPPSPSMP) and 71-104 (SSPPSSSMPPASWAPPSPLSPPAPSLPPTSPPAT). Positions 105–114 (APETSAATGS) are enriched in low complexity. Mg(2+)-binding residues include D238, D239, E243, N386, S390, and E394.

Belongs to the terpene synthase family. 2-methylisoborneol synthase subfamily. Mg(2+) is required as a cofactor.

The catalysed reaction is (E)-2-methylgeranyl diphosphate + H2O = 2-methylisoborneol + diphosphate. Its function is as follows. Catalyzes the cyclization of 2-methylgeranyl diphosphate (2-MeGPP) to 2-methylisoborneol (2-MIB), which likely involves the intermediacy of 2-methyllinalyl diphosphate. This Streptomyces lasalocidi (Streptomyces lasaliensis) protein is 2-methylisoborneol synthase (tpc).